Consider the following 72-residue polypeptide: Translation initiation factor IF-1 (72 aa).

An S1-like domain is found at 2 to 72 (AKEDCIEMQG…NKGRIIFRSR (71 aa)).

It belongs to the IF-1 family. In terms of assembly, component of the 30S ribosomal translation pre-initiation complex which assembles on the 30S ribosome in the order IF-2 and IF-3, IF-1 and N-formylmethionyl-tRNA(fMet); mRNA recruitment can occur at any time during PIC assembly.

Its subcellular location is the cytoplasm. In terms of biological role, one of the essential components for the initiation of protein synthesis. Stabilizes the binding of IF-2 and IF-3 on the 30S subunit to which N-formylmethionyl-tRNA(fMet) subsequently binds. Helps modulate mRNA selection, yielding the 30S pre-initiation complex (PIC). Upon addition of the 50S ribosomal subunit IF-1, IF-2 and IF-3 are released leaving the mature 70S translation initiation complex. This Pasteurella multocida (strain Pm70) protein is Translation initiation factor IF-1.